Consider the following 295-residue polypeptide: 4-diphosphocytidyl-2-C-methyl-D-erythritol kinase (295 aa).

The active site involves Lys-22. 106–116 (PAGGGFGGGSS) is an ATP binding site. The active site involves Asp-148.

The protein belongs to the GHMP kinase family. IspE subfamily.

The enzyme catalyses 4-CDP-2-C-methyl-D-erythritol + ATP = 4-CDP-2-C-methyl-D-erythritol 2-phosphate + ADP + H(+). The protein operates within isoprenoid biosynthesis; isopentenyl diphosphate biosynthesis via DXP pathway; isopentenyl diphosphate from 1-deoxy-D-xylulose 5-phosphate: step 3/6. Functionally, catalyzes the phosphorylation of the position 2 hydroxy group of 4-diphosphocytidyl-2C-methyl-D-erythritol. The polypeptide is 4-diphosphocytidyl-2-C-methyl-D-erythritol kinase (Xanthomonas campestris pv. campestris (strain 8004)).